The chain runs to 27 residues: uncharacterized protein (27 aa).

This is an uncharacterized protein from Archaeoglobus fulgidus (strain ATCC 49558 / DSM 4304 / JCM 9628 / NBRC 100126 / VC-16).